The following is a 770-amino-acid chain: MDFVEEFTDEERLKIEQDFSRLADKCYLDHAGTALYGESQLRAVQELLAGGLYCNPHTSRTMEDLIDLVRYRVLRWFQTRPADYSLVFTSGTTASLKLVAESFEFGPGDAEPGSFVYLRDSHTSVLGMRELVRTGRVQPIERAELLQALNEPEDPRRQHPHRPSLLVFPAQCNFNGAKYPLELCELIERNGLRGYGGDAFHVCLDAASHVSTSPLDLSRYRPSFVCLSFYKIFGYPTGLGALLVRRDAEPLLRGKRYYGGGTVKIALSGPDRFHERRDALPDRLEDGTINFLSIAALLPCLETLTRLIPGPTMDRIQRHTFQLARHCYRELQALQHANGGRVVDLYHDTAFGDARTQGAIVNFNVLNDDGGHVGFAEVACMAANHGIYLRTGCFCNPGACQRHLRLADDDLLRHYRAGHVCGDANDLIDGQPTGSVRVSFGYCTRRSDVDRLVAMVRRCYVRRSLTGPLSRADVLAQYKSYDRPRLVQLCLYPVKSCGPLRVTTGGWPLAPTGLLYDRAFLIVDEHGAAMTQKKLPTMCRIRPDIADGRLVLRHADLEDEPLTIGLEGGGEAGEPAAAHLCQTKVCRDSVQGVDCGERAADWVSRALGVSGLRLLRQSGQEPRRQRQTDRALSLNNQAQLLLINRTSVRWLRDKVGDGDWDGADAPSLDALVDRFRGNLIVETVRPLEESDWRQVLIGPSQFTVDGPCTRCQMICIDQATGERTAEPLRTISREFGGRMRFGVYLSLAGDWADRELPLGATVSGVIEESE.

At K231 the chain carries N6-(pyridoxal phosphate)lysine. The active site involves C395. Positions 601–770 (DWVSRALGVS…TVSGVIEESE (170 aa)) constitute an MOSC domain.

Belongs to the class-V pyridoxal-phosphate-dependent aminotransferase family. MOCOS subfamily. The cofactor is pyridoxal 5'-phosphate.

It catalyses the reaction Mo-molybdopterin + L-cysteine + AH2 = thio-Mo-molybdopterin + L-alanine + A + H2O. In terms of biological role, sulfurates the molybdenum cofactor. Sulfation of molybdenum is essential for xanthine dehydrogenase (XDH) and aldehyde oxidase (ADO) enzymes in which molybdenum cofactor is liganded by 1 oxygen and 1 sulfur atom in active form. This is Molybdenum cofactor sulfurase from Anopheles gambiae (African malaria mosquito).